The primary structure comprises 153 residues: Arginine repressor (153 aa).

Belongs to the ArgR family.

Its subcellular location is the cytoplasm. It participates in amino-acid biosynthesis; L-arginine biosynthesis [regulation]. Functionally, regulates arginine biosynthesis genes. This Haemophilus ducreyi (strain 35000HP / ATCC 700724) protein is Arginine repressor.